The primary structure comprises 179 residues: Acireductone dioxygenase (179 aa).

Positions 97, 99, 103, and 141 each coordinate Fe(2+). Ni(2+) is bound by residues H97, H99, E103, and H141.

It belongs to the acireductone dioxygenase (ARD) family. In terms of assembly, monomer. Requires Fe(2+) as cofactor. Ni(2+) is required as a cofactor.

It catalyses the reaction 1,2-dihydroxy-5-(methylsulfanyl)pent-1-en-3-one + O2 = 3-(methylsulfanyl)propanoate + CO + formate + 2 H(+). It carries out the reaction 1,2-dihydroxy-5-(methylsulfanyl)pent-1-en-3-one + O2 = 4-methylsulfanyl-2-oxobutanoate + formate + 2 H(+). It functions in the pathway amino-acid biosynthesis; L-methionine biosynthesis via salvage pathway; L-methionine from S-methyl-5-thio-alpha-D-ribose 1-phosphate: step 5/6. Catalyzes 2 different reactions between oxygen and the acireductone 1,2-dihydroxy-3-keto-5-methylthiopentene (DHK-MTPene) depending upon the metal bound in the active site. Fe-containing acireductone dioxygenase (Fe-ARD) produces formate and 2-keto-4-methylthiobutyrate (KMTB), the alpha-ketoacid precursor of methionine in the methionine recycle pathway. Ni-containing acireductone dioxygenase (Ni-ARD) produces methylthiopropionate, carbon monoxide and formate, and does not lie on the methionine recycle pathway. The protein is Acireductone dioxygenase of Granulibacter bethesdensis (strain ATCC BAA-1260 / CGDNIH1).